The sequence spans 1202 residues: MIEFWRSEYTRILSICPDPGKKYRNKNVRMWSLYLERVREVIWKTKQEFKAEYSFPKTSLAANKVDDVSPKFVMEVMDVFVENLNVLMKINDPCLWLFVPGHMKEQIEQVLKELKLLRFFVCFVSSKCIEPQYRRTTFYTHALIEASHNAMVVWLHLPVYGNKNQDLAPTEVSRLLSDFMEMKIKSIQPGNSIYIDVLQALKSTIPQAQQKHAAESGIVEIPIHSLTVGLSDQMANLQEMICLLRDNLIHLPILDLEFHLQDMDSVILDAGLLIYSFYDIKGEKEDTMLEDINRALGFDLPRNIEPIKAMVYLVMQKAFQCNLPRVHGLGYVDFLLKNLKDFQGRYSDSLAFLKNQLQVIQTEFESLQPFLKVVAEEPHNKLKTLNEDCATQIIRKSYEDIIEEITCIKAKIQEKNTVEDTMKTVIARTSSQLARTLRMNEEIVGFEDVIEKLRNRLLNRTKGQDVISIHGMPGLGKTTLANRLYSDMSVVSQFDICARCCVSQVYSYKDLLLSLIRDAIGENSDQHRELIRDAIGENSDQHRELCANELADKLRKTLLRRRYLILVDDVWENSVWDDLRGWFPDANNRSRIILMTRHHEVAKYASVHGDPLHLRMLDEDESWKLLEKKVFGEQSCSSPLLKNVGLRIAKMCGQLPLSIVLVAGILSEMEKEVECWEQVANNLGSHIHNDSRAIVDQSYHVLPCHLKSCFLYFGAFLEDRVIDISRLIGLWISESFIKSCEGRRLEYIAEGYLENLIGRNLVMVTQRAISDGKVKACRLHDVLLDFCKKRAAEENFLLWINRDQSTKAVYSHKQHAHLAFTEMDNLVEWSASCSLVGSVLFKSYDPYFRPLSSHAFAISHILLNFKFLKVLDLEHQVIIDFIPTELFYLRYLSAHIDQNSIPSSISNLWNLETLILKSRSASKHNRVLLPSTVWDMVKLRHLHIPYFSTEDEEALLENSAKLYDLETLSSPYFSRVEDAELMLRRTPNLRKLICEVQCLESPHQYHVLNFPIRLEILKLYNRSKAFKTIPFCISAPNLKYLKLSRFYLDSQYLSETADHLKHLEVLKLSCVEFGDHGEWEVSNGMFPQLKILKLEYVSLMKWIVADDVFPNLEQLVLRGCRHLMEIPSCFMDILSLKYIKVDEYSESVVQSARKIQETQIEEYQNNNFKLVIIKVHYREKLNELFSLLSLTVLGLVLHPIFL.

Coiled-coil stretches lie at residues 345–368 (RYSD…ESLQ) and 437–459 (LRMN…RLLN). The NB-ARC domain occupies 426 to 741 (IARTSSQLAR…ISESFIKSCE (316 aa)). Residue 471 to 478 (GMPGLGKT) coordinates ATP. LRR repeat units follow at residues 865–889 (FKFL…LFYL), 908–936 (LWNL…VWDM), 1011–1036 (PIRL…ISAP), 1040–1059 (YLKL…TADH), 1060–1084 (LKHL…VSNG), 1086–1111 (FPQL…VFPN), and 1128–1151 (SCFM…VVQS).

It belongs to the disease resistance NB-LRR family.

The protein resides in the cytoplasm. Its subcellular location is the membrane. In terms of biological role, confers resistance to late blight (Phytophthora infestans) races carrying the avirulence gene Avr1. Resistance proteins guard the plant against pathogens that contain an appropriate avirulence protein via an indirect interaction with this avirulence protein. That triggers a defense system including the hypersensitive response, which restricts the pathogen growth. The chain is Putative late blight resistance protein homolog R1B-8 (R1B-8) from Solanum demissum (Wild potato).